Reading from the N-terminus, the 403-residue chain is uncharacterized protein (403 aa).

The first 26 residues, 1-26 (MYKFKTNLFLVIYFIAIFSIESSISS), serve as a signal peptide directing secretion. The Extracellular portion of the chain corresponds to 27–381 (FNTEINSNSN…DSDNSSFGIS (355 aa)). Asparagine 58, asparagine 90, asparagine 93, asparagine 124, asparagine 137, asparagine 371, and asparagine 375 each carry an N-linked (GlcNAc...) asparagine glycan. Residues 382–402 (IQKYLNSFLNSFIIILIINII) traverse the membrane as a helical segment. Isoleucine 403 is a topological domain (cytoplasmic).

The protein resides in the membrane. This is an uncharacterized protein from Dictyostelium discoideum (Social amoeba).